The chain runs to 359 residues: Probable S-adenosylmethionine-dependent methyltransferase At5g38100 (359 aa).

Residues Tyr-19, Cys-63, Asn-68, Asp-104, Ser-133, and Phe-134 each coordinate S-adenosyl-L-homocysteine. Residues Asn-172, Asp-258, and Phe-260 each contribute to the Mg(2+) site.

Belongs to the methyltransferase superfamily. Type-7 methyltransferase family. In terms of assembly, homodimer. Mg(2+) serves as cofactor.

The protein is Probable S-adenosylmethionine-dependent methyltransferase At5g38100 of Arabidopsis thaliana (Mouse-ear cress).